A 181-amino-acid chain; its full sequence is Adenine phosphoribosyltransferase (181 aa).

Belongs to the purine/pyrimidine phosphoribosyltransferase family. In terms of assembly, homodimer.

It localises to the cytoplasm. It carries out the reaction AMP + diphosphate = 5-phospho-alpha-D-ribose 1-diphosphate + adenine. It participates in purine metabolism; AMP biosynthesis via salvage pathway; AMP from adenine: step 1/1. In terms of biological role, catalyzes a salvage reaction resulting in the formation of AMP, that is energically less costly than de novo synthesis. This chain is Adenine phosphoribosyltransferase, found in Pseudoalteromonas translucida (strain TAC 125).